We begin with the raw amino-acid sequence, 33 residues long: Photosystem II reaction center protein Psb30 (33 aa).

A helical transmembrane segment spans residues 5–25 (LIGQLVTVALVVGAGPIIIGA).

It belongs to the Psb30/Ycf12 family. As to quaternary structure, PSII is composed of 1 copy each of membrane proteins PsbA, PsbB, PsbC, PsbD, PsbE, PsbF, PsbH, PsbI, PsbJ, PsbK, PsbL, PsbM, PsbT, PsbX, PsbY, PsbZ, Psb30/Ycf12, peripheral proteins of the oxygen-evolving complex and a large number of cofactors. It forms dimeric complexes.

The protein resides in the plastid. It is found in the chloroplast thylakoid membrane. A core subunit of photosystem II (PSII), probably helps stabilize the reaction center. This Ostreococcus tauri protein is Photosystem II reaction center protein Psb30.